The following is a 96-amino-acid chain: Small, acid-soluble spore protein gamma-type (96 aa).

Polar residues predominate over residues 1–15 (MNTKNFTPQESRTNA). The interval 1-96 (MNTKNFTPQE…SEAKKRNNQQ (96 aa)) is disordered. Residues 16–27 (QQVRQQNQQSAQ) show a composition bias toward low complexity. Positions 28 to 41 (GTSSGFATEFASET) are enriched in polar residues. 2 consecutive repeats follow at residues 28–52 (GTSSGFATEFASETNAQQVRQQNQQ) and 61–87 (GATAGGFNTEFASETNVQQVRQQNQQS). Composition is skewed to low complexity over residues 42–57 (NAQQVRQQNQQSAQAN) and 76–86 (NVQQVRQQNQQ).

This sequence belongs to the gamma-type SASP family.

Functionally, SASP are proteins degraded in the first minutes of spore germination and provide amino acids for both new protein synthesis and metabolism. These proteins may be involved in dormant spore's high resistance to UV light. The polypeptide is Small, acid-soluble spore protein gamma-type (Laceyella sacchari (Thermoactinomyces thalpophilus)).